Reading from the N-terminus, the 473-residue chain is Photosystem II CP43 reaction center protein (473 aa).

The propeptide occupies 1–14 (MKTLYSPRRYYPVE). The residue at position 15 (Thr-15) is an N-acetylthreonine. A Phosphothreonine modification is found at Thr-15. Transmembrane regions (helical) follow at residues 69 to 93 (LFEV…PHLA), 134 to 155 (IIGP…KDKN), 178 to 200 (KAVW…RVIT), 255 to 275 (KPFA…LSYS), and 291 to 312 (WFNN…ASQA). Residue Glu-367 participates in [CaMn4O5] cluster binding. The helical transmembrane segment at 447-471 (RARAAAAGFEKGIERETEPVLFMSP) threads the bilayer.

It belongs to the PsbB/PsbC family. PsbC subfamily. PSII is composed of 1 copy each of membrane proteins PsbA, PsbB, PsbC, PsbD, PsbE, PsbF, PsbH, PsbI, PsbJ, PsbK, PsbL, PsbM, PsbT, PsbX, PsbY, PsbZ, Psb30/Ycf12, at least 3 peripheral proteins of the oxygen-evolving complex and a large number of cofactors. It forms dimeric complexes. Binds multiple chlorophylls and provides some of the ligands for the Ca-4Mn-5O cluster of the oxygen-evolving complex. It may also provide a ligand for a Cl- that is required for oxygen evolution. PSII binds additional chlorophylls, carotenoids and specific lipids. is required as a cofactor.

The protein localises to the plastid. It localises to the chloroplast thylakoid membrane. Functionally, one of the components of the core complex of photosystem II (PSII). It binds chlorophyll and helps catalyze the primary light-induced photochemical processes of PSII. PSII is a light-driven water:plastoquinone oxidoreductase, using light energy to abstract electrons from H(2)O, generating O(2) and a proton gradient subsequently used for ATP formation. The protein is Photosystem II CP43 reaction center protein of Chaetosphaeridium globosum (Charophycean green alga).